The sequence spans 734 residues: Photosystem I P700 chlorophyll a apoprotein A2 (734 aa).

A run of 8 helical transmembrane segments spans residues 46–69, 135–158, 175–199, 273–291, 330–353, 369–395, 417–439, and 517–535; these read IFASHFGQLAIIFLWTSGNLFHVA, LYTGALFLLFLSAVSLIAGWLHLQ, LNHHLSGLFGVSSLAWTGHLVHVAI, IAHHHLAIALIFLVAGHMY, VHFQLGLALASLGVITSLVAQHMY, AALYTHHQYIAGFIMTGAFAHGAIFFI, AIISHLSWASLFLGFHTLGLYVH, and FLVHHAIALGLHTTTLILV. Residues Cys559 and Cys568 each coordinate [4Fe-4S] cluster. The next 2 helical transmembrane spans lie at 575 to 596 and 643 to 665; these read AFYLAVFWMLNTIGWVTFYWHW and LSVWAWMFLFGHLVWATGFMFLI. His654, Met662, and Tyr670 together coordinate chlorophyll a. Trp671 contributes to the phylloquinone binding site. Residues 707 to 727 form a helical membrane-spanning segment; it reads LVGLAHFSVGYIFTYAAFLIA.

It belongs to the PsaA/PsaB family. The PsaA/B heterodimer binds the P700 chlorophyll special pair and subsequent electron acceptors. PSI consists of a core antenna complex that captures photons, and an electron transfer chain that converts photonic excitation into a charge separation. The eukaryotic PSI reaction center is composed of at least 11 subunits. P700 is a chlorophyll a/chlorophyll a' dimer, A0 is one or more chlorophyll a, A1 is one or both phylloquinones and FX is a shared 4Fe-4S iron-sulfur center. serves as cofactor.

Its subcellular location is the plastid. It localises to the chloroplast thylakoid membrane. It catalyses the reaction reduced [plastocyanin] + hnu + oxidized [2Fe-2S]-[ferredoxin] = oxidized [plastocyanin] + reduced [2Fe-2S]-[ferredoxin]. PsaA and PsaB bind P700, the primary electron donor of photosystem I (PSI), as well as the electron acceptors A0, A1 and FX. PSI is a plastocyanin-ferredoxin oxidoreductase, converting photonic excitation into a charge separation, which transfers an electron from the donor P700 chlorophyll pair to the spectroscopically characterized acceptors A0, A1, FX, FA and FB in turn. Oxidized P700 is reduced on the lumenal side of the thylakoid membrane by plastocyanin. This is Photosystem I P700 chlorophyll a apoprotein A2 from Platanus occidentalis (Sycamore).